The primary structure comprises 1021 residues: DNA-directed RNA polymerase 2B, chloroplastic/mitochondrial (1021 aa).

The interval 315 to 337 (KKQKAEKDKQKEDGEHVTQEQEK) is disordered. Residues aspartate 722, lysine 797, and aspartate 954 contribute to the active site.

This sequence belongs to the phage and mitochondrial RNA polymerase family.

It is found in the plastid. The protein resides in the chloroplast. It localises to the mitochondrion. The catalysed reaction is RNA(n) + a ribonucleoside 5'-triphosphate = RNA(n+1) + diphosphate. DNA-dependent RNA polymerase catalyzes the transcription of DNA into RNA using the four ribonucleoside triphosphates as substrates. The polypeptide is DNA-directed RNA polymerase 2B, chloroplastic/mitochondrial (RPOT2-TOM) (Nicotiana tabacum (Common tobacco)).